We begin with the raw amino-acid sequence, 548 residues long: Glucose-6-phosphate isomerase (548 aa).

Catalysis depends on glutamate 353, which acts as the Proton donor. Active-site residues include histidine 384 and lysine 512.

The protein belongs to the GPI family.

It is found in the cytoplasm. The catalysed reaction is alpha-D-glucose 6-phosphate = beta-D-fructose 6-phosphate. Its pathway is carbohydrate biosynthesis; gluconeogenesis. It functions in the pathway carbohydrate degradation; glycolysis; D-glyceraldehyde 3-phosphate and glycerone phosphate from D-glucose: step 2/4. In terms of biological role, catalyzes the reversible isomerization of glucose-6-phosphate to fructose-6-phosphate. The sequence is that of Glucose-6-phosphate isomerase from Chlorobium chlorochromatii (strain CaD3).